A 191-amino-acid polypeptide reads, in one-letter code: Accessory gene regulator protein B (191 aa).

5 consecutive transmembrane segments (helical) span residues 45–65, 81–101, 108–128, 144–164, and 165–185; these read IVVYGLALLFHVFLYTLTVHL, STFACYIESIILFVILPWILI, IFMIVLAAVAFILICLYSPAI, ITAIFVAGILLIISFFIKQPF, and NELVQLGIVLIGAAQLPIFFP.

This sequence belongs to the AgrB family.

The protein localises to the cell membrane. Its function is as follows. Essential for the production of a quorum sensing system signal molecule, the autoinducing peptide (AIP). This quorum sensing system is responsible for the regulation of the expression of virulence factor genes. Involved in the proteolytic processing of AgrD, the precursor of AIP. The polypeptide is Accessory gene regulator protein B (Staphylococcus carnosus (strain TM300)).